A 449-amino-acid chain; its full sequence is Putative cytochrome P450 135A1 (449 aa).

C383 is a binding site for heme.

Belongs to the cytochrome P450 family. Heme is required as a cofactor.

In Mycobacterium tuberculosis (strain CDC 1551 / Oshkosh), this protein is Putative cytochrome P450 135A1 (cyp135A1).